Here is a 90-residue protein sequence, read N- to C-terminus: Inactive casein kinase II subunit alpha-2 (90 aa).

ATP contacts are provided by residues 40–48 and K63; that span reads VGRGKYSEV.

It belongs to the protein kinase superfamily. Ser/Thr protein kinase family. CK2 subfamily.

In terms of biological role, the Nipponbare allele of HD6 contains a premature stop codon, resulting in a truncated non-functional product. This Oryza sativa subsp. japonica (Rice) protein is Inactive casein kinase II subunit alpha-2.